A 326-amino-acid polypeptide reads, in one-letter code: 4-hydroxy-3-methylbut-2-enyl diphosphate reductase 1 (326 aa).

Cys-27 is a [4Fe-4S] cluster binding site. (2E)-4-hydroxy-3-methylbut-2-enyl diphosphate contacts are provided by His-56 and His-89. Residues His-56 and His-89 each coordinate dimethylallyl diphosphate. 2 residues coordinate isopentenyl diphosphate: His-56 and His-89. A [4Fe-4S] cluster-binding site is contributed by Cys-111. (2E)-4-hydroxy-3-methylbut-2-enyl diphosphate is bound at residue His-139. His-139 provides a ligand contact to dimethylallyl diphosphate. His-139 is a binding site for isopentenyl diphosphate. Glu-141 functions as the Proton donor in the catalytic mechanism. Thr-179 is a (2E)-4-hydroxy-3-methylbut-2-enyl diphosphate binding site. Position 209 (Cys-209) interacts with [4Fe-4S] cluster. Ser-237, Ser-238, Asn-239, and Ser-281 together coordinate (2E)-4-hydroxy-3-methylbut-2-enyl diphosphate. Dimethylallyl diphosphate-binding residues include Ser-237, Ser-238, Asn-239, and Ser-281. Positions 237, 238, 239, and 281 each coordinate isopentenyl diphosphate.

It belongs to the IspH family. [4Fe-4S] cluster serves as cofactor.

It catalyses the reaction isopentenyl diphosphate + 2 oxidized [2Fe-2S]-[ferredoxin] + H2O = (2E)-4-hydroxy-3-methylbut-2-enyl diphosphate + 2 reduced [2Fe-2S]-[ferredoxin] + 2 H(+). The enzyme catalyses dimethylallyl diphosphate + 2 oxidized [2Fe-2S]-[ferredoxin] + H2O = (2E)-4-hydroxy-3-methylbut-2-enyl diphosphate + 2 reduced [2Fe-2S]-[ferredoxin] + 2 H(+). Its pathway is isoprenoid biosynthesis; dimethylallyl diphosphate biosynthesis; dimethylallyl diphosphate from (2E)-4-hydroxy-3-methylbutenyl diphosphate: step 1/1. It participates in isoprenoid biosynthesis; isopentenyl diphosphate biosynthesis via DXP pathway; isopentenyl diphosphate from 1-deoxy-D-xylulose 5-phosphate: step 6/6. Catalyzes the conversion of 1-hydroxy-2-methyl-2-(E)-butenyl 4-diphosphate (HMBPP) into a mixture of isopentenyl diphosphate (IPP) and dimethylallyl diphosphate (DMAPP). Acts in the terminal step of the DOXP/MEP pathway for isoprenoid precursor biosynthesis. The sequence is that of 4-hydroxy-3-methylbut-2-enyl diphosphate reductase 1 from Burkholderia pseudomallei (strain K96243).